Consider the following 326-residue polypeptide: Protein FAM50 homolog (326 aa).

The segment at 76–112 is disordered; it reads EISNRDLQVARGASSSTSLAKDSQEAREKEEHVAKHT. The segment covering 97-109 has biased composition (basic and acidic residues); that stretch reads DSQEAREKEEHVA.

This sequence belongs to the FAM50 family.

The protein is Protein FAM50 homolog of Caenorhabditis briggsae.